Reading from the N-terminus, the 301-residue chain is Probable 5-dehydro-4-deoxyglucarate dehydratase (301 aa).

The protein belongs to the DapA family.

It catalyses the reaction 5-dehydro-4-deoxy-D-glucarate + H(+) = 2,5-dioxopentanoate + CO2 + H2O. It participates in carbohydrate acid metabolism; D-glucarate degradation; 2,5-dioxopentanoate from D-glucarate: step 2/2. This Rhizobium meliloti (strain 1021) (Ensifer meliloti) protein is Probable 5-dehydro-4-deoxyglucarate dehydratase.